Here is a 418-residue protein sequence, read N- to C-terminus: Calreticulin (418 aa).

Positions 1–17 (MLLPVPLLLGLLGLAAA) are cleaved as a signal peptide. The interval 18 to 197 (EPVVYFKEQF…NSQVESGSLE (180 aa)) is N-domain. Position 26 (Gln26) interacts with Ca(2+). Position 48 is an N6-acetyllysine (Lys48). 2 residues coordinate Ca(2+): Lys62 and Lys64. Lys64 carries the N6-(2-hydroxyisobutyryl)lysine modification. Residues Cys105 and Cys137 are joined by a disulfide bond. Positions 109, 111, 128, and 135 each coordinate an alpha-D-glucoside. Lys159 carries the post-translational modification N6-acetyllysine. The stretch at 191-202 (VESGSLEDDWDF) is one 1-1 repeat. The 4 X approximate repeats stretch occupies residues 191–255 (VESGSLEDDW…DAKKPEDWDE (65 aa)). The disordered stretch occupies residues 193–277 (SGSLEDDWDF…NPEYKGEWKP (85 aa)). The tract at residues 198 to 308 (DDWDFLPPKK…YSPDANIYAY (111 aa)) is P-domain. A compositionally biased stretch (basic and acidic residues) spans 207–251 (KIKDPDASKPEDWDERAKIDDPTDSKPEDWDKPEHIPDPDAKKPE). N6-acetyllysine is present on Lys209. A run of 6 repeats spans residues 210 to 221 (DPDASKPEDWDE), 227 to 238 (DPTDSKPEDWDK), 244 to 255 (DPDAKKPEDWDE), 259 to 269 (GEWEPPVIQNP), 273 to 283 (GEWKPRQIDNP), and 287 to 297 (GTWIHPEIDNP). The tract at residues 237–270 (DKPEHIPDPDAKKPEDWDEEMDGEWEPPVIQNPE) is interaction with PPIB. Acidic residues predominate over residues 252 to 261 (DWDEEMDGEW). The segment at 259–297 (GEWEPPVIQNPEYKGEWKPRQIDNPDYKGTWIHPEIDNP) is 3 X approximate repeats. A C-domain region spans residues 309 to 418 (DSFAVLGLDL…AAAGQAKDEL (110 aa)). An an alpha-D-glucoside-binding site is contributed by Asp317. Asp328 serves as a coordination point for Ca(2+). The tract at residues 349–418 (VTKTAEKQMK…AAAGQAKDEL (70 aa)) is disordered. The span at 352–379 (TAEKQMKDKQDEEQRLKEEEEEKKRKEE) shows a compositional bias: basic and acidic residues. A compositionally biased stretch (acidic residues) spans 380–409 (EEAEEDEEDKDDKEDEDEDEEDKDEEEEEA). The short motif at 415-418 (KDEL) is the Prevents secretion from ER element.

It belongs to the calreticulin family. Monomer. Component of an EIF2 complex at least composed of CELF1/CUGBP1, CALR, CALR3, EIF2S1, EIF2S2, HSP90B1 and HSPA5. Interacts with PDIA3/ERp57 and SPACA9. Interacts with TRIM21. Interacts with NR3C1. Interacts with PPIB. Interacts (via P-domain) with PDIA5. Interacts with CLCC1.

The protein resides in the endoplasmic reticulum lumen. It is found in the cytoplasm. It localises to the cytosol. The protein localises to the secreted. Its subcellular location is the extracellular space. The protein resides in the extracellular matrix. It is found in the cell surface. It localises to the sarcoplasmic reticulum lumen. The protein localises to the cytoplasmic vesicle. Its subcellular location is the secretory vesicle. The protein resides in the cortical granule. It is found in the cytolytic granule. In terms of biological role, calcium-binding chaperone that promotes folding, oligomeric assembly and quality control in the endoplasmic reticulum (ER) via the calreticulin/calnexin cycle. This lectin interacts transiently with almost all of the monoglucosylated glycoproteins that are synthesized in the ER. Interacts with the DNA-binding domain of NR3C1 and mediates its nuclear export. Involved in maternal gene expression regulation. May participate in oocyte maturation via the regulation of calcium homeostasis. Present in the cortical granules of non-activated oocytes, is exocytosed during the cortical reaction in response to oocyte activation and might participate in the block to polyspermy. This chain is Calreticulin (CALR), found in Oryctolagus cuniculus (Rabbit).